The sequence spans 198 residues: ATP-dependent Clp protease proteolytic subunit 1 (198 aa).

Ser98 acts as the Nucleophile in catalysis. His123 is an active-site residue.

This sequence belongs to the peptidase S14 family. As to quaternary structure, fourteen ClpP subunits assemble into 2 heptameric rings which stack back to back to give a disk-like structure with a central cavity, resembling the structure of eukaryotic proteasomes.

It is found in the cytoplasm. The enzyme catalyses Hydrolysis of proteins to small peptides in the presence of ATP and magnesium. alpha-casein is the usual test substrate. In the absence of ATP, only oligopeptides shorter than five residues are hydrolyzed (such as succinyl-Leu-Tyr-|-NHMec, and Leu-Tyr-Leu-|-Tyr-Trp, in which cleavage of the -Tyr-|-Leu- and -Tyr-|-Trp bonds also occurs).. In terms of biological role, cleaves peptides in various proteins in a process that requires ATP hydrolysis. Has a chymotrypsin-like activity. Plays a major role in the degradation of misfolded proteins. ClpXP1 is involved in the complete degradation of the Site-2 clipped anti-sigma-W factor RsiW. This results in the release of SigW and the transcription activation of the genes under the control of the sigma-W factor. This Bacillus licheniformis (strain ATCC 14580 / DSM 13 / JCM 2505 / CCUG 7422 / NBRC 12200 / NCIMB 9375 / NCTC 10341 / NRRL NRS-1264 / Gibson 46) protein is ATP-dependent Clp protease proteolytic subunit 1.